Reading from the N-terminus, the 563-residue chain is Eukaryotic translation initiation factor 3 subunit D-1 (563 aa).

Residues 98–136 (VQKPPHQRGRFRNMRGRGGRGRNPRGGLNNHHHHGMTTL) form a disordered region. The segment covering 100-120 (KPPHQRGRFRNMRGRGGRGRN) has biased composition (basic residues). Residues 291–305 (EFDLLTVNESSVEPP) form an RNA gate region.

Belongs to the eIF-3 subunit D family. In terms of assembly, component of the eukaryotic translation initiation factor 3 (eIF-3) complex. The eIF-3 complex interacts with pix.

Its subcellular location is the cytoplasm. Its function is as follows. mRNA cap-binding component of the eukaryotic translation initiation factor 3 (eIF-3) complex, which is involved in protein synthesis of a specialized repertoire of mRNAs and, together with other initiation factors, stimulates binding of mRNA and methionyl-tRNAi to the 40S ribosome. The eIF-3 complex specifically targets and initiates translation of a subset of mRNAs involved in cell proliferation. In the eIF-3 complex, eif3d specifically recognizes and binds the 7-methylguanosine cap of a subset of mRNAs. The protein is Eukaryotic translation initiation factor 3 subunit D-1 of Drosophila pseudoobscura pseudoobscura (Fruit fly).